The chain runs to 365 residues: Fructose-1,6-bisphosphatase class 1 2 (365 aa).

Residues Glu100, Asp122, Leu124, and Asp125 each contribute to the Mg(2+) site. Residues 125–128 (DGSS) and Asn221 contribute to the substrate site. Glu293 contributes to the Mg(2+) binding site.

This sequence belongs to the FBPase class 1 family. Homotetramer. Mg(2+) serves as cofactor.

Its subcellular location is the cytoplasm. It carries out the reaction beta-D-fructose 1,6-bisphosphate + H2O = beta-D-fructose 6-phosphate + phosphate. It participates in carbohydrate biosynthesis; gluconeogenesis. The sequence is that of Fructose-1,6-bisphosphatase class 1 2 from Leptothrix cholodnii (strain ATCC 51168 / LMG 8142 / SP-6) (Leptothrix discophora (strain SP-6)).